We begin with the raw amino-acid sequence, 179 residues long: NADH dehydrogenase [ubiquinone] 1 beta subcomplex subunit 9 (179 aa).

A2 is modified (N-acetylalanine). S85 is subject to Phosphoserine. The disordered stretch occupies residues Q139–Q160.

It belongs to the complex I LYR family. Mammalian complex I is composed of 45 different subunits.

It is found in the mitochondrion inner membrane. In terms of biological role, accessory subunit of the mitochondrial membrane respiratory chain NADH dehydrogenase (Complex I), that is believed to be not involved in catalysis. Complex I functions in the transfer of electrons from NADH to the respiratory chain. The immediate electron acceptor for the enzyme is believed to be ubiquinone. This Bos taurus (Bovine) protein is NADH dehydrogenase [ubiquinone] 1 beta subcomplex subunit 9 (NDUFB9).